A 77-amino-acid chain; its full sequence is U8-lycotoxin-Ls1a (77 aa).

An N-terminal signal peptide occupies residues 1–20 (MKLIIFTGLVLFAIVSLIEA). The propeptide occupies 21 to 26 (QAENEK).

It belongs to the neurotoxin 19 (CSTX) family. 08 (U8-Lctx) subfamily. Post-translationally, contains 4 disulfide bonds. In terms of tissue distribution, expressed by the venom gland.

It is found in the secreted. This chain is U8-lycotoxin-Ls1a, found in Lycosa singoriensis (Wolf spider).